The following is a 163-amino-acid chain: 2-C-methyl-D-erythritol 2,4-cyclodiphosphate synthase (163 aa).

A divalent metal cation-binding residues include D8 and H10. 4-CDP-2-C-methyl-D-erythritol 2-phosphate contacts are provided by residues 8-10 and 34-35; these read DVH and HS. H42 contributes to the a divalent metal cation binding site. 4-CDP-2-C-methyl-D-erythritol 2-phosphate is bound by residues 56–58, 132–135, F139, and R142; these read DIG and TTTE.

It belongs to the IspF family. Homotrimer. It depends on a divalent metal cation as a cofactor.

It carries out the reaction 4-CDP-2-C-methyl-D-erythritol 2-phosphate = 2-C-methyl-D-erythritol 2,4-cyclic diphosphate + CMP. It participates in isoprenoid biosynthesis; isopentenyl diphosphate biosynthesis via DXP pathway; isopentenyl diphosphate from 1-deoxy-D-xylulose 5-phosphate: step 4/6. Its function is as follows. Involved in the biosynthesis of isopentenyl diphosphate (IPP) and dimethylallyl diphosphate (DMAPP), two major building blocks of isoprenoid compounds. Catalyzes the conversion of 4-diphosphocytidyl-2-C-methyl-D-erythritol 2-phosphate (CDP-ME2P) to 2-C-methyl-D-erythritol 2,4-cyclodiphosphate (ME-CPP) with a corresponding release of cytidine 5-monophosphate (CMP). The protein is 2-C-methyl-D-erythritol 2,4-cyclodiphosphate synthase of Moorella thermoacetica (strain ATCC 39073 / JCM 9320).